The sequence spans 401 residues: Phosphoglycerate kinase (401 aa).

Residues 21–23 (DFN), arginine 36, 59–62 (HLGR), arginine 119, and arginine 160 contribute to the substrate site. ATP is bound by residues lysine 212, glutamate 330, and 357–360 (GGDS).

It belongs to the phosphoglycerate kinase family. Monomer.

It localises to the cytoplasm. The enzyme catalyses (2R)-3-phosphoglycerate + ATP = (2R)-3-phospho-glyceroyl phosphate + ADP. The protein operates within carbohydrate degradation; glycolysis; pyruvate from D-glyceraldehyde 3-phosphate: step 2/5. The chain is Phosphoglycerate kinase from Limosilactobacillus reuteri subsp. reuteri (strain JCM 1112) (Lactobacillus reuteri).